The following is a 479-amino-acid chain: Poly(A) polymerase catalytic subunit (479 aa).

Catalysis depends on residues Asp-202 and Asp-204. Residues Asp-202, Asp-204, and Asp-253 each coordinate Ca(2+).

The protein belongs to the poxviridae poly(A) polymerase catalytic subunit family. In terms of assembly, heterodimer of a large (catalytic) subunit and a small (regulatory) subunit.

The enzyme catalyses RNA(n) + ATP = RNA(n)-3'-adenine ribonucleotide + diphosphate. Its function is as follows. Polymerase that creates the 3'-poly(A) tail of mRNA's. The polypeptide is Poly(A) polymerase catalytic subunit (OPG063) (Cynomys gunnisoni (Gunnison's prairie dog)).